The sequence spans 565 residues: Hemagglutinin-neuraminidase (565 aa).

Residues 1–19 are Intravirion-facing; sequence MVAEDAPVRATCRVLFRTT. The helical transmembrane segment at 20–40 threads the bilayer; sequence TLIFLCTLLALSISILYESLI. Residues 41 to 565 are Virion surface-facing; that stretch reads TQKQIMSQAG…VPFIRQVTLS (525 aa). Asn-139 is a glycosylation site (N-linked (GlcNAc...) asparagine; by host). Intrachain disulfides connect Cys-161–Cys-185, Cys-175–Cys-236, and Cys-227–Cys-240. Positions 223 to 228 are involved in neuraminidase activity; the sequence is NRKSCS. Asn-267 carries an N-linked (GlcNAc...) asparagine; by host glycan. Cystine bridges form between Cys-333/Cys-454, Cys-365/Cys-375, and Cys-448/Cys-458. Asn-504 carries N-linked (GlcNAc...) asparagine; by host glycosylation. Cys-528 and Cys-539 are disulfide-bonded.

The protein belongs to the paramyxoviruses hemagglutinin-neuraminidase family. As to quaternary structure, homotetramer; composed of disulfide-linked homodimers. Interacts with F protein trimer.

It localises to the virion membrane. It is found in the host cell membrane. The catalysed reaction is Hydrolysis of alpha-(2-&gt;3)-, alpha-(2-&gt;6)-, alpha-(2-&gt;8)- glycosidic linkages of terminal sialic acid residues in oligosaccharides, glycoproteins, glycolipids, colominic acid and synthetic substrates.. In terms of biological role, attaches the virus to sialic acid-containing cell receptors and thereby initiating infection. Binding of HN protein to the receptor induces a conformational change that allows the F protein to trigger virion/cell membranes fusion. Its function is as follows. Neuraminidase activity ensures the efficient spread of the virus by dissociating the mature virions from the neuraminic acid containing glycoproteins. The polypeptide is Hemagglutinin-neuraminidase (HN) (Canis lupus familiaris (Dog)).